Here is a 78-residue protein sequence, read N- to C-terminus: Mandibular organ-inhibiting hormone 2 (78 aa).

Disulfide bonds link Cys-7–Cys-44, Cys-24–Cys-40, and Cys-27–Cys-53.

This sequence belongs to the arthropod CHH/MIH/GIH/VIH hormone family. As to expression, produced by the medulla terminalis X-organ in the eyestalks and transported to the sinus gland where it is stored and released.

The protein resides in the secreted. Functionally, represses the synthesis of methyl farnesoate, the precursor of insect juvenile hormone III in the mandibular organ. The sequence is that of Mandibular organ-inhibiting hormone 2 from Cancer pagurus (Rock crab).